Reading from the N-terminus, the 947-residue chain is Bifunctional glutamine synthetase adenylyltransferase/adenylyl-removing enzyme (947 aa).

The segment at methionine 1 to glutamate 443 is adenylyl removase. The interval alanine 451–alanine 947 is adenylyl transferase.

Belongs to the GlnE family. Requires Mg(2+) as cofactor.

The enzyme catalyses [glutamine synthetase]-O(4)-(5'-adenylyl)-L-tyrosine + phosphate = [glutamine synthetase]-L-tyrosine + ADP. It catalyses the reaction [glutamine synthetase]-L-tyrosine + ATP = [glutamine synthetase]-O(4)-(5'-adenylyl)-L-tyrosine + diphosphate. Involved in the regulation of glutamine synthetase GlnA, a key enzyme in the process to assimilate ammonia. When cellular nitrogen levels are high, the C-terminal adenylyl transferase (AT) inactivates GlnA by covalent transfer of an adenylyl group from ATP to specific tyrosine residue of GlnA, thus reducing its activity. Conversely, when nitrogen levels are low, the N-terminal adenylyl removase (AR) activates GlnA by removing the adenylyl group by phosphorolysis, increasing its activity. The regulatory region of GlnE binds the signal transduction protein PII (GlnB) which indicates the nitrogen status of the cell. The polypeptide is Bifunctional glutamine synthetase adenylyltransferase/adenylyl-removing enzyme (Vibrio parahaemolyticus serotype O3:K6 (strain RIMD 2210633)).